We begin with the raw amino-acid sequence, 302 residues long: Heme A synthase (302 aa).

At 1 to 6 (MNKALK) the chain is on the cytoplasmic side. The chain crosses the membrane as a helical span at residues 7 to 27 (GLGIITTIAMLFVLIGGALVT). Over 28 to 61 (KTGSGMGCGRSWPLCNGSIFPALTLESIIEWSHR) the chain is Extracellular. A disulfide bridge links C35 with C42. Residue E57 is part of the active site. Residue H60 coordinates heme o. A helical transmembrane segment spans residues 62–82 (FVSGTSGVLVLALAIWTWKKI). The Cytoplasmic segment spans residues 83–91 (GHIRETKFL). The helical transmembrane segment at 92 to 112 (AVMSVVFLILQALLGAAAVVF) threads the bilayer. Topologically, residues 113-120 (GSSALIMA) are extracellular. The helical transmembrane segment at 121–141 (LHFGISLISFASVLLLTLLVF) threads the bilayer. H122 is a heme o binding site. Over 142-158 (EADSKQKSESFYIGKTM) the chain is Cytoplasmic. The helical transmembrane segment at 159 to 179 (QFHMIGIIIYTYVVVYTGAYV) threads the bilayer. Residues 180-208 (RHTSSSLACLDFPMCSTENGWLPGKFHEW) are Extracellular-facing. C188 and C194 form a disulfide bridge. Residues 209 to 229 (VQMGHRAAALLLFAWIIAAAV) form a helical membrane-spanning segment. Residue H213 coordinates heme b. The Cytoplasmic portion of the chain corresponds to 230 to 242 (HAARQYKNQKRIY). A helical membrane pass occupies residues 243 to 263 (WGWMISLILIILQAASGIAVV). Over 264–272 (YSRLDLGFA) the chain is Extracellular. Residues 273-293 (LAHAFFISCLFGILCYFLLLV) traverse the membrane as a helical segment. Residue H275 participates in heme b binding. The Cytoplasmic portion of the chain corresponds to 294–302 (ARYRRQVQK).

Belongs to the COX15/CtaA family. Type 1 subfamily. As to quaternary structure, interacts with CtaB. Requires heme b as cofactor.

It is found in the cell membrane. It catalyses the reaction Fe(II)-heme o + 2 A + H2O = Fe(II)-heme a + 2 AH2. The protein operates within porphyrin-containing compound metabolism; heme A biosynthesis; heme A from heme O: step 1/1. Catalyzes the conversion of heme O to heme A by two successive hydroxylations of the methyl group at C8. The first hydroxylation forms heme I, the second hydroxylation results in an unstable dihydroxymethyl group, which spontaneously dehydrates, resulting in the formyl group of heme A. The chain is Heme A synthase from Bacillus licheniformis (strain ATCC 14580 / DSM 13 / JCM 2505 / CCUG 7422 / NBRC 12200 / NCIMB 9375 / NCTC 10341 / NRRL NRS-1264 / Gibson 46).